The sequence spans 205 residues: uncharacterized protein (205 aa).

2 helical membrane passes run 12–32 and 49–69; these read WQIYVGLLLGLIIGLLVGVGF and WISSLSTLIIMCFTAVGVMSW.

It localises to the host membrane. This is an uncharacterized protein from Haemophilus influenzae (Bacteriophage HP1).